Reading from the N-terminus, the 557-residue chain is Dihydroxy-acid dehydratase (557 aa).

D78 provides a ligand contact to Mg(2+). C119 is a binding site for [2Fe-2S] cluster. Mg(2+)-binding residues include D120 and K121. K121 is subject to N6-carboxylysine. A [2Fe-2S] cluster-binding site is contributed by C192. Residue E442 participates in Mg(2+) binding. Catalysis depends on S468, which acts as the Proton acceptor.

It belongs to the IlvD/Edd family. In terms of assembly, homodimer. [2Fe-2S] cluster serves as cofactor. The cofactor is Mg(2+).

It carries out the reaction (2R)-2,3-dihydroxy-3-methylbutanoate = 3-methyl-2-oxobutanoate + H2O. The enzyme catalyses (2R,3R)-2,3-dihydroxy-3-methylpentanoate = (S)-3-methyl-2-oxopentanoate + H2O. Its pathway is amino-acid biosynthesis; L-isoleucine biosynthesis; L-isoleucine from 2-oxobutanoate: step 3/4. The protein operates within amino-acid biosynthesis; L-valine biosynthesis; L-valine from pyruvate: step 3/4. Functions in the biosynthesis of branched-chain amino acids. Catalyzes the dehydration of (2R,3R)-2,3-dihydroxy-3-methylpentanoate (2,3-dihydroxy-3-methylvalerate) into 2-oxo-3-methylpentanoate (2-oxo-3-methylvalerate) and of (2R)-2,3-dihydroxy-3-methylbutanoate (2,3-dihydroxyisovalerate) into 2-oxo-3-methylbutanoate (2-oxoisovalerate), the penultimate precursor to L-isoleucine and L-valine, respectively. The sequence is that of Dihydroxy-acid dehydratase from Bacillus cytotoxicus (strain DSM 22905 / CIP 110041 / 391-98 / NVH 391-98).